Reading from the N-terminus, the 338-residue chain is Ribosomal RNA small subunit methyltransferase H (338 aa).

Residues 53 to 55, aspartate 72, tyrosine 99, aspartate 123, and glutamine 130 contribute to the S-adenosyl-L-methionine site; that span reads GGH. The interval 277-298 is disordered; sequence ITPRSKSKSPEGLPVELPGMGP.

This sequence belongs to the methyltransferase superfamily. RsmH family.

The protein localises to the cytoplasm. The enzyme catalyses cytidine(1402) in 16S rRNA + S-adenosyl-L-methionine = N(4)-methylcytidine(1402) in 16S rRNA + S-adenosyl-L-homocysteine + H(+). Its function is as follows. Specifically methylates the N4 position of cytidine in position 1402 (C1402) of 16S rRNA. This is Ribosomal RNA small subunit methyltransferase H from Rhodococcus opacus (strain B4).